Consider the following 310-residue polypeptide: B3 domain-containing protein At4g02870 (310 aa).

Residues 1–21 (MTLSDDPISPSTQESSNSSYV) show a composition bias toward polar residues. A disordered region spans residues 1–39 (MTLSDDPISPSTQESSNSSYVRSKEAEKNSPSQETDEEV). The TF-B3 DNA-binding region spans 205-300 (RCGRLILQSS…RLQFGVISRN (96 aa)).

Its subcellular location is the nucleus. This Arabidopsis thaliana (Mouse-ear cress) protein is B3 domain-containing protein At4g02870 (ARF42).